The primary structure comprises 1080 residues: Myocardin-related transcription factor B (1080 aa).

An RPEL 1 repeat occupies 40–65 (EVLQLRLQQRRTREQLVDQGIMPPLK). Serine 66 bears the Phosphoserine mark. RPEL repeat units follow at residues 84–109 (NFLK…EETF) and 128–153 (DDLN…PVDS). Disordered regions lie at residues 170–222 (THGE…AQFT), 234–311 (TPLT…EPQM), 352–384 (PIKT…SSLD), and 477–501 (PHVE…LSTD). Polar residues-rich tracts occupy residues 188–200 (QPAS…SAAS) and 240–259 (QPPT…SSAK). The span at 272-287 (NPNDKHRSKKCKDPKP) shows a compositional bias: basic and acidic residues. The span at 358–370 (NSSSGSNSGSSSS) shows a compositional bias: low complexity. Positions 383 to 417 (LDDLKVSELKTELKLRGLPVSGTKPDLIERLKPYQ) constitute an SAP domain. Phosphoserine occurs at positions 531, 535, and 537. Residues 539 to 594 (SSSTLSTLELDAAEKDRKLQEKEKQIEELKRKLEQEQKLVEVLKMQLEVEKRGQQR) are a coiled coil. A required for interaction with itself and with MRTFA region spans residues 557-585 (LQEKEKQIEELKRKLEQEQKLVEVLKMQL). Disordered stretches follow at residues 588–646 (EKRG…SVGQ) and 794–846 (LQYQ…PQQF). Positions 595-606 (PPDPQPSDPPHP) are enriched in pro residues. A Glycyl lysine isopeptide (Lys-Gly) (interchain with G-Cter in SUMO1) cross-link involves residue lysine 622. Residues 794–821 (LQYQRQPGPTNQQPFVSKTSNPALQSRT) are compositionally biased toward polar residues. A Phosphoserine modification is found at serine 913. Residues 969–988 (GTLPSATDTGPLQNSSEDRE) are disordered. The span at 972–983 (PSATDTGPLQNS) shows a compositional bias: polar residues.

As to quaternary structure, interacts with MRTFA and SRF. O-glycosylated. As to expression, widely expressed. High expression in heart, brain and testis. Lower expression in lung, liver and kidney.

The protein localises to the nucleus. Its function is as follows. Acts as a transcriptional coactivator of serum response factor (SRF). Required for skeletal myogenic differentiation. The polypeptide is Myocardin-related transcription factor B (Mrtfb) (Mus musculus (Mouse)).